An 84-amino-acid polypeptide reads, in one-letter code: Small ribosomal subunit protein bS18 (84 aa).

This sequence belongs to the bacterial ribosomal protein bS18 family. Part of the 30S ribosomal subunit. Forms a tight heterodimer with protein bS6.

In terms of biological role, binds as a heterodimer with protein bS6 to the central domain of the 16S rRNA, where it helps stabilize the platform of the 30S subunit. This Ruthia magnifica subsp. Calyptogena magnifica protein is Small ribosomal subunit protein bS18.